Here is a 142-residue protein sequence, read N- to C-terminus: Large ribosomal subunit protein uL13 (142 aa).

It belongs to the universal ribosomal protein uL13 family. Part of the 50S ribosomal subunit.

Functionally, this protein is one of the early assembly proteins of the 50S ribosomal subunit, although it is not seen to bind rRNA by itself. It is important during the early stages of 50S assembly. This chain is Large ribosomal subunit protein uL13, found in Aromatoleum aromaticum (strain DSM 19018 / LMG 30748 / EbN1) (Azoarcus sp. (strain EbN1)).